A 307-amino-acid polypeptide reads, in one-letter code: Transaldolase (307 aa).

Lys125 (schiff-base intermediate with substrate) is an active-site residue.

It belongs to the transaldolase family. Type 1 subfamily.

It localises to the cytoplasm. It carries out the reaction D-sedoheptulose 7-phosphate + D-glyceraldehyde 3-phosphate = D-erythrose 4-phosphate + beta-D-fructose 6-phosphate. Its pathway is carbohydrate degradation; pentose phosphate pathway; D-glyceraldehyde 3-phosphate and beta-D-fructose 6-phosphate from D-ribose 5-phosphate and D-xylulose 5-phosphate (non-oxidative stage): step 2/3. In terms of biological role, transaldolase is important for the balance of metabolites in the pentose-phosphate pathway. This chain is Transaldolase, found in Pseudomonas aeruginosa (strain ATCC 15692 / DSM 22644 / CIP 104116 / JCM 14847 / LMG 12228 / 1C / PRS 101 / PAO1).